We begin with the raw amino-acid sequence, 163 residues long: MSQFDEKNKHIDVMGIRKILPHRYPFALLDKIVDWSIEDRTIVAHKNVTINEDFFNGHFPEFPVMPGVLIVEAMAQATAILGELMAETLFAHVVAKAGGGRRTFMLAGIDKVRVKRPVVPGDVLVIESRMVKQKNIICTAESVAKVDGQIVCSAELMAAYKDY.

His-58 is an active-site residue.

It belongs to the thioester dehydratase family. FabZ subfamily.

The protein localises to the cytoplasm. It carries out the reaction a (3R)-hydroxyacyl-[ACP] = a (2E)-enoyl-[ACP] + H2O. Functionally, involved in unsaturated fatty acids biosynthesis. Catalyzes the dehydration of short chain beta-hydroxyacyl-ACPs and long chain saturated and unsaturated beta-hydroxyacyl-ACPs. This chain is 3-hydroxyacyl-[acyl-carrier-protein] dehydratase FabZ, found in Francisella philomiragia subsp. philomiragia (strain ATCC 25017 / CCUG 19701 / FSC 153 / O#319-036).